The sequence spans 291 residues: N-acetylmannosamine kinase (291 aa).

Residues 5-12 (AIDIGGTK) and 132-139 (GVGGGVVC) contribute to the ATP site. 4 residues coordinate Zn(2+): His156, Cys166, Cys168, and Cys173.

The protein belongs to the ROK (NagC/XylR) family. NanK subfamily. Homodimer.

The catalysed reaction is an N-acyl-D-mannosamine + ATP = an N-acyl-D-mannosamine 6-phosphate + ADP + H(+). The protein operates within amino-sugar metabolism; N-acetylneuraminate degradation; D-fructose 6-phosphate from N-acetylneuraminate: step 2/5. Catalyzes the phosphorylation of N-acetylmannosamine (ManNAc) to ManNAc-6-P. This is N-acetylmannosamine kinase from Salmonella heidelberg (strain SL476).